A 625-amino-acid polypeptide reads, in one-letter code: Glucokinase regulatory protein (625 aa).

SIS domains follow at residues 90 to 286 and 320 to 499; these read VQEV…QGIA and VSTS…LLGK. Residues 109–110, Glu153, and 179–181 each bind beta-D-fructose 1-phosphate; these read TS and SVG. 109–110 serves as a coordination point for beta-D-fructose 6-phosphate; sequence TS. Beta-D-fructose 6-phosphate is bound at residue 179–181; sequence SVG. The tract at residues 199–200 is important for interaction with GCK; the sequence is AV. Glu348 lines the beta-D-fructose 1-phosphate pocket. Positions 463–465 are essential for interaction with GCK; it reads LLF. Lys514 contributes to the beta-D-fructose 1-phosphate binding site. Lys514 serves as a coordination point for beta-D-fructose 6-phosphate.

The protein belongs to the GCKR family. As to quaternary structure, interacts (fructose 6-phosphate bound form) with GCK. In terms of tissue distribution, found in liver and pancreas. Not detected in muscle, brain, heart, thymus, intestine, uterus, adipose tissue, kidney, adrenal, lung or spleen.

It is found in the cytoplasm. Its subcellular location is the nucleus. The protein resides in the mitochondrion. Functionally, regulates glucokinase (GCK) by forming an inactive complex with this enzyme. Acts by promoting GCK recruitment to the nucleus, possibly to provide a reserve of GCK that can be quickly released in the cytoplasm after a meal. The affinity of GCKR for GCK is modulated by fructose metabolites: GCKR with bound fructose 6-phosphate has increased affinity for GCK, while GCKR with bound fructose 1-phosphate has strongly decreased affinity for GCK and does not inhibit GCK activity. This chain is Glucokinase regulatory protein, found in Homo sapiens (Human).